The primary structure comprises 494 residues: UDP-N-acetylmuramoyl-L-alanyl-D-glutamate--L-lysine ligase (494 aa).

Serine 30 is a UDP-N-acetyl-alpha-D-muramoyl-L-alanyl-D-glutamate binding site. ATP is bound at residue 110–116 (GTNGKTS). Residues 152–153 (TT), serine 179, and arginine 187 each bind UDP-N-acetyl-alpha-D-muramoyl-L-alanyl-D-glutamate. Lysine 219 bears the N6-carboxylysine mark. The L-lysine recognition motif signature appears at 406 to 409 (DNPA).

Belongs to the MurCDEF family. MurE subfamily. Carboxylation is probably crucial for Mg(2+) binding and, consequently, for the gamma-phosphate positioning of ATP.

The protein resides in the cytoplasm. It catalyses the reaction UDP-N-acetyl-alpha-D-muramoyl-L-alanyl-D-glutamate + L-lysine + ATP = UDP-N-acetyl-alpha-D-muramoyl-L-alanyl-gamma-D-glutamyl-L-lysine + ADP + phosphate + H(+). It functions in the pathway cell wall biogenesis; peptidoglycan biosynthesis. Functionally, catalyzes the addition of L-lysine to the nucleotide precursor UDP-N-acetylmuramoyl-L-alanyl-D-glutamate (UMAG) in the biosynthesis of bacterial cell-wall peptidoglycan. This Staphylococcus haemolyticus (strain JCSC1435) protein is UDP-N-acetylmuramoyl-L-alanyl-D-glutamate--L-lysine ligase.